The following is a 200-amino-acid chain: MTDQGLEGSNPVDLSKHPSGIVPTLQNIVSTVNLDCKLDLKAIALQARNAEYNPKRFAAVIMRIREPKTTALIFASGKMVCTGAKSEDFSKMAARKYARIVQKLGFPAKFKDFKIQNIVGSCDVKFPIRLEGLAYSHAAFSSYEPELFPGLIYRMKVPKIVLLIFVSGKIVITGAKMRDETYKAFENIYPVLSEFRKIQQ.

An N-acetylthreonine modification is found at threonine 2. 2 repeat units span residues 25-101 (LQNI…ARIV) and 115-192 (IQNI…YPVL).

The protein belongs to the TBP family. In terms of assembly, belongs to the TFIID complex together with the TBP-associated factors (TAFs). Binds DNA as monomer. Interacts with TAF1 (via N-terminus). Interacts with MEE12/CCG1. Associates with PWP2 in the nucleus. Component of a nuclear protein complex containing at least TATA binding proteins (TBPs, e.g. TBP1 and TBP2) and ATX1.

The protein resides in the nucleus. Functionally, general transcription factor that functions at the core of the DNA-binding multiprotein factor TFIID. Binding of TFIID to the TATA box is the initial transcriptional step of the pre-initiation complex (PIC), playing a role in the activation of eukaryotic genes transcribed by RNA polymerase II. The chain is TATA-box-binding protein 1 from Arabidopsis thaliana (Mouse-ear cress).